Reading from the N-terminus, the 320-residue chain is Ribose-phosphate pyrophosphokinase (320 aa).

Residues 43 to 45 (DGE) and 102 to 103 (RQ) each bind ATP. Positions 136 and 178 each coordinate Mg(2+). The active site involves lysine 201. D-ribose 5-phosphate is bound by residues arginine 203, aspartate 227, and 231–235 (DTAGT).

Belongs to the ribose-phosphate pyrophosphokinase family. Class I subfamily. In terms of assembly, homohexamer. Mg(2+) is required as a cofactor.

It is found in the cytoplasm. It carries out the reaction D-ribose 5-phosphate + ATP = 5-phospho-alpha-D-ribose 1-diphosphate + AMP + H(+). Its pathway is metabolic intermediate biosynthesis; 5-phospho-alpha-D-ribose 1-diphosphate biosynthesis; 5-phospho-alpha-D-ribose 1-diphosphate from D-ribose 5-phosphate (route I): step 1/1. Its function is as follows. Involved in the biosynthesis of the central metabolite phospho-alpha-D-ribosyl-1-pyrophosphate (PRPP) via the transfer of pyrophosphoryl group from ATP to 1-hydroxyl of ribose-5-phosphate (Rib-5-P). In Clostridium tetani (strain Massachusetts / E88), this protein is Ribose-phosphate pyrophosphokinase.